A 622-amino-acid chain; its full sequence is MPATPNNVPEPSRTDPALIRNFCIIAHIDHGKSTLADRMLQLTGVVDQRQMRAQYLDRMDIERERGITIKSQAVRLPWAPTQEPGNTHILNMIDTPGHVDFTYEVSRSLAACEGTVLLVDAAQGIEAQTLANLYLAMENDLKIIPVLNKIDLPAAQPEKFSEELANLIGCDPEDVLKVSAKTGLGVEALLDKVVAEVPAPVGVADAPARAMIFDSVYDSYRGVVTYVRVIDGQLNKRERIRMMSTGATHELLEIGVSSPEMKPADGLGVGEVGYLITGVKDVRQSKVGDTITTLNKGATEALGGYKDPKPMVFSGLYPLDGSDYPELRDALDKLQLNDAALVYEPETSAALGFGFRVGFLGLLHLDVIRERLEREFGLDLIATAPNVVYRVLMEDGSEHTVTNPSEFPEGKISEVYEPVVRATILAPSEFIGSIMELCQTRRGTLLGMDYLSEDRVEIRYTLPLAEIVFDFFDQLKSKTRGYASLDYEPTGEQASSLVKVDILLHGDKVDAFSAITHKDAAYAYGVRLVAKLRELIPRQAFEVPIQAAIGSRVIARETIRAIRKDVLAKCYGGDISRKRKLLEKQKEGKKRMKMVGSVEVPQEAFIAVLSSDDSGGSAKGKK.

Residues 17-201 (ALIRNFCIIA…KVVAEVPAPV (185 aa)) enclose the tr-type G domain. Residues 29–34 (DHGKST) and 148–151 (NKID) each bind GTP.

Belongs to the TRAFAC class translation factor GTPase superfamily. Classic translation factor GTPase family. LepA subfamily.

The protein localises to the cell membrane. The enzyme catalyses GTP + H2O = GDP + phosphate + H(+). Required for accurate and efficient protein synthesis under certain stress conditions. May act as a fidelity factor of the translation reaction, by catalyzing a one-codon backward translocation of tRNAs on improperly translocated ribosomes. Back-translocation proceeds from a post-translocation (POST) complex to a pre-translocation (PRE) complex, thus giving elongation factor G a second chance to translocate the tRNAs correctly. Binds to ribosomes in a GTP-dependent manner. This is Elongation factor 4 from Streptomyces avermitilis (strain ATCC 31267 / DSM 46492 / JCM 5070 / NBRC 14893 / NCIMB 12804 / NRRL 8165 / MA-4680).